A 341-amino-acid polypeptide reads, in one-letter code: HTH-type transcriptional repressor PurR (341 aa).

The region spanning 2-56 (ATIKDVAKRAGVSTTTVSHVINKTRFVAEETKAAVRAAIKELHYSPSAVARSLKV) is the HTH lacI-type domain. The segment at residues 4-23 (IKDVAKRAGVSTTTVSHVIN) is a DNA-binding region (H-T-H motif). The DNA-binding element occupies 48-56 (SAVARSLKV). Hypoxanthine-binding residues include tyrosine 73, arginine 190, threonine 192, phenylalanine 221, and aspartate 275.

In terms of assembly, homodimer.

It participates in purine metabolism; purine nucleotide biosynthesis [regulation]. Its function is as follows. Is the main repressor of the genes involved in the de novo synthesis of purine nucleotides, regulating purB, purC, purEK, purF, purHD, purL, purMN and guaBA expression. PurR is allosterically activated to bind its cognate DNA by binding the purine corepressors, hypoxanthine or guanine, thereby effecting transcription repression. The chain is HTH-type transcriptional repressor PurR from Pectobacterium carotovorum subsp. carotovorum (strain PC1).